Here is a 329-residue protein sequence, read N- to C-terminus: MTATKQHKKVILVGDGAVGSSYAFALVNQGIAQELGIIEIPALFDKAVGDAEDLSHALAFTSPKKIYAATYADCADADLVVITAGAPQKPGETRLDLVGKNLAINKSIVTQVVESGFNGIFLVAANPVDVLTYSTWKFSGFPKERVIGSGTSLDSARFRQALADKIGVDARSVHAYIMGEHGDSEFAVWSHANVAGVQLEQWLQENRDIDEQGLVDLFISVRDAAYSIINKKGATYYGIAVALARITKAILDDENAVLPLSVYQEGQYGDVKDVFIGQPAIVGAHGIVRPVNIPLNDAELQKMQASAEQLKDIIDEAWKNPEFQEASKN.

NAD(+)-binding positions include valine 18, glutamate 39, lysine 46, tyrosine 71, and 85 to 86 (GA). Residues glutamine 88 and arginine 94 each contribute to the substrate site. Residues serine 107, 124 to 126 (AAN), and serine 149 contribute to the NAD(+) site. Residue 126–129 (NPVD) coordinates substrate. 154–157 (DSAR) contacts substrate. Arginine 159 and histidine 174 together coordinate beta-D-fructose 1,6-bisphosphate. Histidine 181 (proton acceptor) is an active-site residue. Phosphotyrosine is present on tyrosine 226. Threonine 235 provides a ligand contact to substrate.

Belongs to the LDH/MDH superfamily. LDH family. Homotetramer.

The protein localises to the cytoplasm. The catalysed reaction is (S)-lactate + NAD(+) = pyruvate + NADH + H(+). It participates in fermentation; pyruvate fermentation to lactate; (S)-lactate from pyruvate: step 1/1. Its activity is regulated as follows. Allosterically activated by fructose 1,6-bisphosphate (FBP). In terms of biological role, catalyzes the conversion of lactate to pyruvate. The polypeptide is L-lactate dehydrogenase (Streptococcus agalactiae serotype V (strain ATCC BAA-611 / 2603 V/R)).